The sequence spans 315 residues: Long form salivary protein D7L1 (315 aa).

The N-terminal stretch at 1–18 (MIIVAVLLSFLAHLLVQA) is a signal peptide. 2 cysteine pairs are disulfide-bonded: C37/C73 and C69/C128. Thromboxane A2 is bound at residue W55. Position 58 (W58) interacts with leukotriene C4. Y70 serves as a coordination point for thromboxane A2. Positions 152 and 170 each coordinate leukotriene C4. Residue K170 coordinates thromboxane A2. Disulfide bonds link C178–C211 and C252–C263.

The protein belongs to the PBP/GOBP family. In terms of tissue distribution, distal-lateral and median lobes of female salivary gland (at protein level). Not detected in male salivary gland (at protein level). Expressed in female salivary gland. Not detected in female carcass without salivary glands. Expressed in male salivary gland and other tissues.

The protein localises to the secreted. Modulates blood feeding of female mosquitoes on vertebrate species by binding and sequestering different mediators involved in the host response. Binds leukotriene C4, leukotriene D4, leukotriene E4 and stable analogs of thromboxane A2, U-46619 and carbocyclic TXA2. Binds weakly prostaglandins: PGD2, PGE2 and PGF2alpha. Does not bind leukotriene B4, biogenic amines, ADP, platelet activating phospholipid derivative PAF and arachidonic acid. Inhibits agonist-induced smooth muscle contraction. Inhibits platelet aggregation induced by low concentrations of collagen in thromboxane A2-dependent manner. The chain is Long form salivary protein D7L1 from Anopheles stephensi (Indo-Pakistan malaria mosquito).